The sequence spans 598 residues: Aspartate--tRNA(Asp/Asn) ligase (598 aa).

Glu174 provides a ligand contact to L-aspartate. Residues 198–201 (QQLK) are aspartate. L-aspartate is bound at residue Arg220. Residues 220-222 (RDE) and Gln229 each bind ATP. His458 contacts L-aspartate. Position 492 (Glu492) interacts with ATP. L-aspartate is bound at residue Arg499. Residue 544 to 547 (GIDR) coordinates ATP.

This sequence belongs to the class-II aminoacyl-tRNA synthetase family. Type 1 subfamily. Homodimer.

Its subcellular location is the cytoplasm. The enzyme catalyses tRNA(Asx) + L-aspartate + ATP = L-aspartyl-tRNA(Asx) + AMP + diphosphate. Functionally, aspartyl-tRNA synthetase with relaxed tRNA specificity since it is able to aspartylate not only its cognate tRNA(Asp) but also tRNA(Asn). Reaction proceeds in two steps: L-aspartate is first activated by ATP to form Asp-AMP and then transferred to the acceptor end of tRNA(Asp/Asn). The polypeptide is Aspartate--tRNA(Asp/Asn) ligase (Dehalococcoides mccartyi (strain ATCC BAA-2266 / KCTC 15142 / 195) (Dehalococcoides ethenogenes (strain 195))).